The primary structure comprises 346 residues: Biotin synthase (346 aa).

The region spanning 38 to 256 (QQVQVSTLLS…IAVARIMMPT (219 aa)) is the Radical SAM core domain. [4Fe-4S] cluster-binding residues include C53, C57, and C60. [2Fe-2S] cluster contacts are provided by C97, C128, C188, and R260.

It belongs to the radical SAM superfamily. Biotin synthase family. Homodimer. Requires [4Fe-4S] cluster as cofactor. [2Fe-2S] cluster serves as cofactor.

The enzyme catalyses (4R,5S)-dethiobiotin + (sulfur carrier)-SH + 2 reduced [2Fe-2S]-[ferredoxin] + 2 S-adenosyl-L-methionine = (sulfur carrier)-H + biotin + 2 5'-deoxyadenosine + 2 L-methionine + 2 oxidized [2Fe-2S]-[ferredoxin]. The protein operates within cofactor biosynthesis; biotin biosynthesis; biotin from 7,8-diaminononanoate: step 2/2. Its function is as follows. Catalyzes the conversion of dethiobiotin (DTB) to biotin by the insertion of a sulfur atom into dethiobiotin via a radical-based mechanism. The protein is Biotin synthase of Salmonella newport (strain SL254).